Reading from the N-terminus, the 303-residue chain is MNRIALVFLYSLFLFNLAIGRVESQTCQCIQPDPSMLNCLGYDSKLQADTIDEAIASFPDLSLNDDVANQKFSTADVGCVTKECQDCRKDMRKQLQKVGLLAKDINDIVASQVDSNSTCTKYGFTRQQQKKSHDDDDDDDDSDSDESKEEEEKKKRDRKHRRDKRQAITQGSQNNTDPNLIGTRFTISCAMKGVSVDPTGTVSLCSSCWVWRQLPSNYRPQYINELVCDNTDSDCLSGYATCSVGHRTFEAIRNDNGVQTQVTLTAGSYCECRISKSSSLQSLVEGTGISGTYNPLSNHTTPV.

Positions 1–24 (MNRIALVFLYSLFLFNLAIGRVES) are cleaved as a signal peptide. A glycan (N-linked (GlcNAc...) asparagine) is linked at Asn-116. The interval 124–179 (FTRQQQKKSHDDDDDDDDSDSDESKEEEEKKKRDRKHRRDKRQAITQGSQNNTDPN) is disordered. Residues 135 to 149 (DDDDDDDSDSDESKE) show a composition bias toward acidic residues. A compositionally biased stretch (basic residues) spans 155–164 (KRDRKHRRDK). Residues 167 to 178 (AITQGSQNNTDP) show a composition bias toward polar residues.

This is an uncharacterized protein from Caenorhabditis elegans.